The following is a 237-amino-acid chain: Ribose-5-phosphate isomerase A (237 aa).

Residues 33-36 (TGST), 90-93 (DGAD), and 103-106 (KGGG) contribute to the substrate site. Glu-112 functions as the Proton acceptor in the catalytic mechanism. Lys-130 is a binding site for substrate.

The protein belongs to the ribose 5-phosphate isomerase family. As to quaternary structure, homodimer.

The enzyme catalyses aldehydo-D-ribose 5-phosphate = D-ribulose 5-phosphate. It functions in the pathway carbohydrate degradation; pentose phosphate pathway; D-ribose 5-phosphate from D-ribulose 5-phosphate (non-oxidative stage): step 1/1. Its function is as follows. Catalyzes the reversible conversion of ribose-5-phosphate to ribulose 5-phosphate. The protein is Ribose-5-phosphate isomerase A of Gloeothece citriformis (strain PCC 7424) (Cyanothece sp. (strain PCC 7424)).